The sequence spans 107 residues: UPF0102 protein Tlet_0667 (107 aa).

This sequence belongs to the UPF0102 family.

The chain is UPF0102 protein Tlet_0667 from Pseudothermotoga lettingae (strain ATCC BAA-301 / DSM 14385 / NBRC 107922 / TMO) (Thermotoga lettingae).